A 309-amino-acid chain; its full sequence is Homoserine kinase (309 aa).

Residue 91–101 (PIGSGLGSSAC) coordinates ATP.

The protein belongs to the GHMP kinase family. Homoserine kinase subfamily.

Its subcellular location is the cytoplasm. It carries out the reaction L-homoserine + ATP = O-phospho-L-homoserine + ADP + H(+). It functions in the pathway amino-acid biosynthesis; L-threonine biosynthesis; L-threonine from L-aspartate: step 4/5. In terms of biological role, catalyzes the ATP-dependent phosphorylation of L-homoserine to L-homoserine phosphate. This Klebsiella pneumoniae subsp. pneumoniae (strain ATCC 700721 / MGH 78578) protein is Homoserine kinase.